Reading from the N-terminus, the 524-residue chain is Germ cell-less protein-like 1 (524 aa).

A disordered region spans residues 1–37 (MGALSSRVLRPAGRTEQPEPTPGAGGAARRSDAGEDA). A Nuclear localization signal motif is present at residues 47–53 (GRKRKRS). A disordered region spans residues 63–83 (DSETDDDEDEGDEQQRLLNTP). S64 is subject to Phosphoserine. The segment covering 65-74 (ETDDDEDEGD) has biased composition (acidic residues). T66 is modified (phosphothreonine). Positions 83-89 (PRRKKLK) match the Nuclear localization signal motif. One can recognise a BTB domain in the interval 106-176 (SDIKICALGE…LYRDDVLIKP (71 aa)).

As to quaternary structure, interacts with TMPO-Beta, TSG101 and TFDP2. Interacts with EMD. In terms of tissue distribution, ubiquitously expressed at low levels throughout development and in adult tissues.

The protein localises to the nucleus matrix. In terms of biological role, possible function in spermatogenesis. Enhances the degradation of MDM2 and increases the amount of p53 probably by modulating the nucleocytoplasmic transport. This is Germ cell-less protein-like 1 (Gmcl1) from Mus musculus (Mouse).